The following is a 90-amino-acid chain: Large ribosomal subunit protein bL27 (90 aa).

The tract at residues 1–21 is disordered; the sequence is MAHKKAGGSSRNGRDSQAKRL.

The protein belongs to the bacterial ribosomal protein bL27 family.

This chain is Large ribosomal subunit protein bL27, found in Laribacter hongkongensis (strain HLHK9).